Reading from the N-terminus, the 339-residue chain is Heat-inducible transcription repressor HrcA (339 aa).

Belongs to the HrcA family.

Functionally, negative regulator of class I heat shock genes (grpE-dnaK-dnaJ and groELS operons). Prevents heat-shock induction of these operons. This Thermotoga neapolitana (strain ATCC 49049 / DSM 4359 / NBRC 107923 / NS-E) protein is Heat-inducible transcription repressor HrcA.